Reading from the N-terminus, the 409-residue chain is Elongation factor Tu (409 aa).

In terms of domain architecture, tr-type G spans 10–214; it reads KPHVNIGTIG…AVDSYIPTPE (205 aa). The segment at 19–26 is G1; the sequence is GHVDHGKT. 19–26 is a GTP binding site; it reads GHVDHGKT. Mg(2+) is bound at residue Thr-26. The interval 60 to 64 is G2; the sequence is GITIN. A G3 region spans residues 81 to 84; it reads DCPG. GTP contacts are provided by residues 81–85 and 136–139; these read DCPGH and NKVD. The segment at 136-139 is G4; sequence NKVD. Positions 174-176 are G5; that stretch reads SGL.

Belongs to the TRAFAC class translation factor GTPase superfamily. Classic translation factor GTPase family. EF-Tu/EF-1A subfamily. As to quaternary structure, monomer.

It localises to the cytoplasm. The catalysed reaction is GTP + H2O = GDP + phosphate + H(+). Functionally, GTP hydrolase that promotes the GTP-dependent binding of aminoacyl-tRNA to the A-site of ribosomes during protein biosynthesis. The protein is Elongation factor Tu of Cyanothece sp. (strain PCC 7425 / ATCC 29141).